The sequence spans 637 residues: ATP-dependent zinc metalloprotease FtsH (637 aa).

The Cytoplasmic segment spans residues Met1 to Asn44. A helical membrane pass occupies residues Leu45 to Leu65. Over Arg66–Ser141 the chain is Periplasmic. Residues Ser142–Ala162 traverse the membrane as a helical segment. Over Arg163 to Ser637 the chain is Cytoplasmic. Residue Gly231–Thr238 coordinates ATP. Zn(2+) is bound at residue His454. Glu455 is a catalytic residue. His458 and Asp531 together coordinate Zn(2+).

The protein in the central section; belongs to the AAA ATPase family. This sequence in the C-terminal section; belongs to the peptidase M41 family. Homohexamer. Zn(2+) is required as a cofactor.

Its subcellular location is the cell inner membrane. Functionally, acts as a processive, ATP-dependent zinc metallopeptidase for both cytoplasmic and membrane proteins. Plays a role in the quality control of integral membrane proteins. This Methylococcus capsulatus (strain ATCC 33009 / NCIMB 11132 / Bath) protein is ATP-dependent zinc metalloprotease FtsH.